Reading from the N-terminus, the 168-residue chain is Pleiotrophin (168 aa).

Residues 1–32 (MQTPQYLQQRRKFAAAFLAFIFILAAVDTAEA) form the signal peptide. Disulfide bonds link C47/C76, C55/C85, C62/C89, C99/C131, and C109/C141. Chondroitin sulfate binding stretches follow at residues 92–99 (KKQFGAEC) and 123–131 (KRALHNADC). The tract at residues 141–168 (CGKLTKSKPQAESKKKKKEGKKQEKMLD) is disordered. The segment at 147-168 (SKPQAESKKKKKEGKKQEKMLD) is chondroitin sulfate A binding.

In terms of assembly, interacts with ALK and NEK6. Interacts with PTPRZ1 (via chondroitin sulfate groups); promotes formation of homooligomers; oligomerization impairs tyrosine phosphatase activity. Forms a complex with PTPRZ1 and CTNNB1; this complex inactivates PTPRZ1 protein tyrosine phosphatase activity through PTN interaction and stimulates tyrosine phosphorylation of CTNNB1. Interacts with ITGB3 and ITGA5. Forms a complex with PTPRZ1 and integrin alpha-V/beta-3 (ITGAV:ITGB3) that stimulates endothelial cell migration through ITGB3 'Tyr-773' phosphorylation. Interacts with SDC3 (via heparan sulfate chains); this interaction mediates the neurite outgrowth-promoting signal from PTN to the cytoskeleton of growing neurites; this interaction mediates osteoblast recruitment. Interacts with GPC2 (via heparan sulfate); this interaction promotes neurite outgrowth through binding of PTN with chondroitin sulfate of proteoglycans, thereby releasing PTPRS of chondroitin sulfate proteoglycans (CSPGs) and leading to binding with heparan sulfate of GPC2. Post-translationally, phosphorylated by NEK6.

It localises to the secreted. Functionally, secreted growth factor that mediates its signal through cell-surface proteoglycan and non-proteoglycan receptors. Binds cell-surface proteoglycan receptor via their chondroitin sulfate (CS) groups. Thereby regulates many processes like cell proliferation, cell survival, cell growth, cell differentiation and cell migration in several tissues namely neuron and bone. Also plays a role in synaptic plasticity and learning-related behavior by inhibiting long-term synaptic potentiation. Binds PTPRZ1, leading to neutralization of the negative charges of the CS chains of PTPRZ1, inducing PTPRZ1 clustering, thereby causing the dimerization and inactivation of its phosphatase activity leading to increased tyrosine phosphorylation of each of the PTPRZ1 substrates like ALK, CTNNB1 or AFAP1L2 in order to activate the PI3K-AKT pathway. Through PTPRZ1 binding controls oligodendrocyte precursor cell differentiation by enhancing the phosphorylation of AFAP1L2 in order to activate the PI3K-AKT pathway. Forms a complex with PTPRZ1 and integrin alpha-V/beta-3 (ITGAV:ITGB3) that stimulates endothelial cell migration through SRC dephosphorylation and activation that consequently leads to ITGB3 'Tyr-773' phosphorylation. In adult hippocampus promotes dendritic arborization, spine development, and functional integration and connectivity of newborn granule neurons through ALK by activating AKT signaling pathway. Binds GPC2 and chondroitin sulfate proteoglycans (CSPGs) at the neuron surface, leading to abrogation of binding between PTPRS and CSPGs and neurite outgrowth promotion. Binds SDC3 and mediates bone formation by recruiting and attaching osteoblasts/osteoblast precursors to the sites for new bone deposition. Binds ALK and promotes cell survival and cell proliferation through MAPK pathway activation. Inhibits proliferation and enhances differentiation of neural stem cells by inhibiting FGF2-induced fibroblast growth factor receptor signaling pathway. Mediates regulatory mechanisms in normal hemostasis and in hematopoietic regeneration and in maintaining the balance of myeloid and lymphoid regeneration. In addition may play a role in the female reproductive system, auditory response and the progesterone-induced decidualization pathway. The protein is Pleiotrophin of Bos taurus (Bovine).